The chain runs to 181 residues: ATP-dependent protease subunit HslV (181 aa).

Threonine 11 is a catalytic residue. Na(+) is bound by residues alanine 166, cysteine 169, and threonine 172.

The protein belongs to the peptidase T1B family. HslV subfamily. In terms of assembly, a double ring-shaped homohexamer of HslV is capped on each side by a ring-shaped HslU homohexamer. The assembly of the HslU/HslV complex is dependent on binding of ATP.

The protein resides in the cytoplasm. It carries out the reaction ATP-dependent cleavage of peptide bonds with broad specificity.. With respect to regulation, allosterically activated by HslU binding. Its function is as follows. Protease subunit of a proteasome-like degradation complex believed to be a general protein degrading machinery. The polypeptide is ATP-dependent protease subunit HslV (Chlorobaculum tepidum (strain ATCC 49652 / DSM 12025 / NBRC 103806 / TLS) (Chlorobium tepidum)).